The sequence spans 154 residues: Large ribosomal subunit protein uL13 (154 aa).

This sequence belongs to the universal ribosomal protein uL13 family. Part of the 50S ribosomal subunit.

Its function is as follows. This protein is one of the early assembly proteins of the 50S ribosomal subunit, although it is not seen to bind rRNA by itself. It is important during the early stages of 50S assembly. This Bartonella tribocorum (strain CIP 105476 / IBS 506) protein is Large ribosomal subunit protein uL13.